A 737-amino-acid polypeptide reads, in one-letter code: Angiotensin-converting enzyme-like protein Ace3 (737 aa).

An N-terminal signal peptide occupies residues 1 to 23; the sequence is MNLPWALLLVLLSHRQLLPWLRT. The Extracellular portion of the chain corresponds to 24 to 639; the sequence is VGETSLNDFY…TDTEPEQAYL (616 aa). Positions 32–611 constitute a Peptidase M2 domain; it reads FYSEAQAKLF…VKQGDTLGWP (580 aa). A disulfide bridge links C146 with C152. Residues R180 and Y218 each coordinate chloride. C346 and C364 are oxidised to a cystine. 2 residues coordinate Zn(2+): H377 and H381. The N-linked (GlcNAc...) asparagine glycan is linked to N390. E405 serves as a coordination point for Zn(2+). The chloride site is built by W479, R483, and R516. Residues C532 and C544 are joined by a disulfide bond. A helical transmembrane segment spans residues 640–660; it reads GQWVLLSMSFFMLVLILALGF. The Cytoplasmic segment spans residues 661–700; sequence RLHYLEKQLLDEDTMILKTLPYSYFLGIAMEPHQAARKQW. A helical membrane pass occupies residues 701-721; the sequence is LLLGLCCILMLCCIGLLIRIV. Residues 722-737 are Extracellular-facing; that stretch reads TQNTENTPWMKNEGQS.

The protein belongs to the peptidase M2 family. As to quaternary structure, interacts with IZUMO1. The cofactor is Zn(2+). In terms of tissue distribution, expressed in sperm and testis (at protein level). Expressed in heart and testis. Not detected in kidney, lung, liver, brain, ovary, spleen and thymus.

It is found in the cytoplasmic vesicle. The protein resides in the secretory vesicle. It localises to the acrosome membrane. The polypeptide is Angiotensin-converting enzyme-like protein Ace3 (Mus musculus (Mouse)).